The primary structure comprises 520 residues: UDP-N-acetylmuramoyl-L-alanyl-D-glutamate--2,6-diaminopimelate ligase (520 aa).

Leucine 48 contributes to the UDP-N-acetyl-alpha-D-muramoyl-L-alanyl-D-glutamate binding site. 134-140 (GTSGKTT) provides a ligand contact to ATP. Residues 176–177 (TT), serine 203, and arginine 211 contribute to the UDP-N-acetyl-alpha-D-muramoyl-L-alanyl-D-glutamate site. N6-carboxylysine is present on lysine 243. Meso-2,6-diaminopimelate-binding positions include arginine 405, 429–432 (DNPR), glycine 483, and glutamate 487. The Meso-diaminopimelate recognition motif motif lies at 429-432 (DNPR).

The protein belongs to the MurCDEF family. MurE subfamily. Requires Mg(2+) as cofactor. Carboxylation is probably crucial for Mg(2+) binding and, consequently, for the gamma-phosphate positioning of ATP.

It is found in the cytoplasm. It catalyses the reaction UDP-N-acetyl-alpha-D-muramoyl-L-alanyl-D-glutamate + meso-2,6-diaminopimelate + ATP = UDP-N-acetyl-alpha-D-muramoyl-L-alanyl-gamma-D-glutamyl-meso-2,6-diaminopimelate + ADP + phosphate + H(+). The protein operates within cell wall biogenesis; peptidoglycan biosynthesis. Its function is as follows. Catalyzes the addition of meso-diaminopimelic acid to the nucleotide precursor UDP-N-acetylmuramoyl-L-alanyl-D-glutamate (UMAG) in the biosynthesis of bacterial cell-wall peptidoglycan. This Mycolicibacterium paratuberculosis (strain ATCC BAA-968 / K-10) (Mycobacterium paratuberculosis) protein is UDP-N-acetylmuramoyl-L-alanyl-D-glutamate--2,6-diaminopimelate ligase.